Here is a 344-residue protein sequence, read N- to C-terminus: RNA 3'-terminal phosphate cyclase (344 aa).

Residues Gln102 and 284 to 288 each bind ATP; that span reads FLGDQ. Catalysis depends on His308, which acts as the Tele-AMP-histidine intermediate.

This sequence belongs to the RNA 3'-terminal cyclase family. Type 1 subfamily.

The protein resides in the cytoplasm. The enzyme catalyses a 3'-end 3'-phospho-ribonucleotide-RNA + ATP = a 3'-end 2',3'-cyclophospho-ribonucleotide-RNA + AMP + diphosphate. Catalyzes the conversion of 3'-phosphate to a 2',3'-cyclic phosphodiester at the end of RNA. The mechanism of action of the enzyme occurs in 3 steps: (A) adenylation of the enzyme by ATP; (B) transfer of adenylate to an RNA-N3'P to produce RNA-N3'PP5'A; (C) and attack of the adjacent 2'-hydroxyl on the 3'-phosphorus in the diester linkage to produce the cyclic end product. The biological role of this enzyme is unknown but it is likely to function in some aspects of cellular RNA processing. This chain is RNA 3'-terminal phosphate cyclase, found in Thermococcus gammatolerans (strain DSM 15229 / JCM 11827 / EJ3).